The chain runs to 641 residues: Pheromone-processing carboxypeptidase KEX1 (641 aa).

Positions 1-34 are cleaved as a signal peptide; it reads MRSTSTFTRTPAFLLHTLARWLLVWGVLGSSVVA. Residues 35 to 522 are Lumenal-facing; sequence EKKCASNYYV…KAATWAAYYK (488 aa). Ser188 is an active-site residue. Asn207 is a glycosylation site (N-linked (GlcNAc...) asparagine). Residue Asp389 is part of the active site. Asn440 and Asn448 each carry an N-linked (GlcNAc...) asparagine glycan. Residue His451 is part of the active site. Residues 486–506 form a disordered region; that stretch reads DGEKGALTSVGNHPNSTTAEQ. Residues 494–504 are compositionally biased toward polar residues; that stretch reads SVGNHPNSTTA. A glycan (N-linked (GlcNAc...) asparagine) is linked at Asn500. Residues 523–543 form a helical membrane-spanning segment; the sequence is SGEVALVVVAIAAAVWGFFIW. The Cytoplasmic segment spans residues 544 to 641; sequence RSRRQRQGSG…PSNMPSSSSS (98 aa). The segment at 593–641 is disordered; sequence LDTLRGTDDRSRGANGHGSVGGDSEDEDEKFGAQKESYHPSNMPSSSSS. Over residues 594-604 the composition is skewed to basic and acidic residues; it reads DTLRGTDDRSR. The span at 631–641 shows a compositional bias: polar residues; sequence HPSNMPSSSSS.

The protein belongs to the peptidase S10 family.

The protein resides in the golgi apparatus. The protein localises to the trans-Golgi network membrane. The enzyme catalyses Preferential release of a C-terminal arginine or lysine residue.. Functionally, protease with a carboxypeptidase B-like function involved in the C-terminal processing of the lysine and arginine residues from protein precursors. Promotes cell fusion and is involved in the programmed cell death. This Coccidioides posadasii (strain C735) (Valley fever fungus) protein is Pheromone-processing carboxypeptidase KEX1 (KEX1).